Here is a 286-residue protein sequence, read N- to C-terminus: Bifunctional protein FolD (286 aa).

Residues 165-167 (GRS), serine 190, and valine 231 contribute to the NADP(+) site.

The protein belongs to the tetrahydrofolate dehydrogenase/cyclohydrolase family. As to quaternary structure, homodimer.

The enzyme catalyses (6R)-5,10-methylene-5,6,7,8-tetrahydrofolate + NADP(+) = (6R)-5,10-methenyltetrahydrofolate + NADPH. It carries out the reaction (6R)-5,10-methenyltetrahydrofolate + H2O = (6R)-10-formyltetrahydrofolate + H(+). Its pathway is one-carbon metabolism; tetrahydrofolate interconversion. Its function is as follows. Catalyzes the oxidation of 5,10-methylenetetrahydrofolate to 5,10-methenyltetrahydrofolate and then the hydrolysis of 5,10-methenyltetrahydrofolate to 10-formyltetrahydrofolate. The polypeptide is Bifunctional protein FolD (Bacillus cereus (strain ATCC 14579 / DSM 31 / CCUG 7414 / JCM 2152 / NBRC 15305 / NCIMB 9373 / NCTC 2599 / NRRL B-3711)).